Consider the following 353-residue polypeptide: MTIAVGKFTKDENDLFDIMDDWLRRDRFVFVGWSGLLLFPCAYFAVGGWFTGTTFVTSWYTHGLASSYLEGCNFLTAAVSTPANSLAHSLLLLWGPEAQGDFTRWCQLGGLWTFVALHGAFGLIGFMLRQFELARSVQLRPYNAIAFSGPIAVFVSVFLIYPLGQSGWFFAPSFGVAAIFRFILFFQGFHNWTLNPFHMMGVAGVLGAALLCAIHGATVENTLFEDGDGANTFRAFNPTQAEETYSMVTANRFWSQIFGVAFSNKRWLHFFMLFVPVTGLWMSALGVVGLALNLRAYDFVSQEIRAAEDPEFETFYTKNILLNEGIRAWMAAQDQPHENLIFPEEVLPRGNAL.

T2 is modified (N-acetylthreonine). T2 carries the phosphothreonine modification. The helical transmembrane segment at 41–61 threads the bilayer; that stretch reads CAYFAVGGWFTGTTFVTSWYT. A chlorophyll a-binding site is contributed by H118. Residues 125 to 141 traverse the membrane as a helical segment; it reads GFMLRQFELARSVQLRP. Q130 and N143 together coordinate pheophytin a. Residues 153–166 traverse the membrane as a helical segment; it reads VFVSVFLIYPLGQS. H198 is a chlorophyll a binding site. A helical transmembrane segment spans residues 208–228; the sequence is AALLCAIHGATVENTLFEDGD. A plastoquinone is bound by residues H215 and F262. A Fe cation-binding site is contributed by H215. H269 contributes to the Fe cation binding site. Residues 279-295 form a helical membrane-spanning segment; sequence GLWMSALGVVGLALNLR.

Belongs to the reaction center PufL/M/PsbA/D family. As to quaternary structure, PSII is composed of 1 copy each of membrane proteins PsbA, PsbB, PsbC, PsbD, PsbE, PsbF, PsbH, PsbI, PsbJ, PsbK, PsbL, PsbM, PsbT, PsbX, PsbY, PsbZ, Psb30/Ycf12, at least 3 peripheral proteins of the oxygen-evolving complex and a large number of cofactors. It forms dimeric complexes. Requires The D1/D2 heterodimer binds P680, chlorophylls that are the primary electron donor of PSII, and subsequent electron acceptors. It shares a non-heme iron and each subunit binds pheophytin, quinone, additional chlorophylls, carotenoids and lipids. There is also a Cl(-1) ion associated with D1 and D2, which is required for oxygen evolution. The PSII complex binds additional chlorophylls, carotenoids and specific lipids. as cofactor.

The protein resides in the plastid. It is found in the chloroplast thylakoid membrane. The catalysed reaction is 2 a plastoquinone + 4 hnu + 2 H2O = 2 a plastoquinol + O2. In terms of biological role, photosystem II (PSII) is a light-driven water:plastoquinone oxidoreductase that uses light energy to abstract electrons from H(2)O, generating O(2) and a proton gradient subsequently used for ATP formation. It consists of a core antenna complex that captures photons, and an electron transfer chain that converts photonic excitation into a charge separation. The D1/D2 (PsbA/PsbD) reaction center heterodimer binds P680, the primary electron donor of PSII as well as several subsequent electron acceptors. D2 is needed for assembly of a stable PSII complex. This is Photosystem II D2 protein from Cucumis sativus (Cucumber).